Reading from the N-terminus, the 621-residue chain is Chaperone protein HtpG (621 aa).

The a; substrate-binding stretch occupies residues Met1–Arg341. Residues Glu342–Asn547 are b. Residues Phe548–Leu621 are c.

Belongs to the heat shock protein 90 family. In terms of assembly, homodimer.

It is found in the cytoplasm. In terms of biological role, molecular chaperone. Has ATPase activity. This chain is Chaperone protein HtpG, found in Helicobacter pylori (strain HPAG1).